Consider the following 729-residue polypeptide: Isocitrate dehydrogenase [NADP] (729 aa).

The NADP(+) site is built by Asn83 and Ser85. Positions 121, 124, 128, 134, and 244 each coordinate D-threo-isocitrate. Asn124 is an NADP(+) binding site. Asp337 contributes to the Mg(2+) binding site. Residues Tyr407 and Arg534 each coordinate D-threo-isocitrate. Positions 535 and 539 each coordinate Mg(2+). NADP(+) is bound by residues Ser572, His576, Arg587, Asp589, and Arg636.

It belongs to the monomeric-type IDH family. As to quaternary structure, monomer. The cofactor is Mg(2+). It depends on Mn(2+) as a cofactor.

The catalysed reaction is D-threo-isocitrate + NADP(+) = 2-oxoglutarate + CO2 + NADPH. In terms of biological role, catalyzes the oxidative decarboxylation of isocitrate to 2-oxoglutarate and carbon dioxide with the concomitant reduction of NADP(+). In Corynebacterium efficiens (strain DSM 44549 / YS-314 / AJ 12310 / JCM 11189 / NBRC 100395), this protein is Isocitrate dehydrogenase [NADP].